We begin with the raw amino-acid sequence, 180 residues long: Inner membrane-spanning protein YciB (180 aa).

5 helical membrane-spanning segments follow: residues 25–45, 49–69, 76–96, 118–138, and 150–170; these read QNAT…CYII, VSKL…ITLI, IKIK…MSGI, IILS…NEVV, and FKVF…LPLL.

This sequence belongs to the YciB family.

It is found in the cell inner membrane. In terms of biological role, plays a role in cell envelope biogenesis, maintenance of cell envelope integrity and membrane homeostasis. This chain is Inner membrane-spanning protein YciB, found in Rickettsia prowazekii (strain Madrid E).